Reading from the N-terminus, the 104-residue chain is U-scoloptoxin(10)-Cw1a (104 aa).

The first 23 residues, M1–T23, serve as a signal peptide directing secretion.

This sequence belongs to the scoloptoxin-10 family. Post-translationally, contains 3 disulfide bonds. Expressed by the venom gland.

It localises to the secreted. The sequence is that of U-scoloptoxin(10)-Cw1a from Cormocephalus westwoodi (Westwood's green centipede).